Reading from the N-terminus, the 1483-residue chain is Cystic fibrosis transmembrane conductance regulator (1483 aa).

The Cytoplasmic segment spans residues 1–77; the sequence is MQRSPLEKAS…KLINALRRCF (77 aa). A helical membrane pass occupies residues 78 to 98; that stretch reads FWRFAFYGILLYLGEVTKAVQ. Positions 81 to 365 constitute an ABC transmembrane type-1 1 domain; the sequence is FAFYGILLYL…WAVQTWYDSL (285 aa). Over 99 to 122 the chain is Extracellular; that stretch reads PLLLGRIIASYDPDNKQERSIAIY. Residues 123 to 146 form a helical membrane-spanning segment; sequence LAIGLCLLFIMRPLLLHPAIFGLH. At 147–195 the chain is on the cytoplasmic side; the sequence is HIGMQIRIAMFSLIYKKTLKLSSRVLDKISIGQLVSLLSNNLNKFDEGL. Residues 196–216 form a helical membrane-spanning segment; it reads ALAHFVWIAPLQVTLLMGLLW. The Extracellular portion of the chain corresponds to 217 to 222; it reads DLLQAS. Residues 223 to 243 form a helical membrane-spanning segment; it reads AFCGLAFLIVLALVQAGLGRM. The Cytoplasmic portion of the chain corresponds to 244-298; it reads IMKYRDQRAGKINERLVITSEVIENIQSVKAYCWEEAMEKIIENIRQTELKLTRK. Residues 299-319 form a helical membrane-spanning segment; sequence AAHVRYFNSSAFFFSGFFVVS. The Extracellular portion of the chain corresponds to 320–339; the sequence is LSVLPYALIKTIILRKIFTT. A helical membrane pass occupies residues 340–358; sequence ISFCIVLRMAVTRQFPWAV. Topologically, residues 359-859 are cytoplasmic; sequence QTWYDSLGAI…YLRYITVHKN (501 aa). ATP contacts are provided by residues Trp-401, Ser-434, 458 to 465, and Gln-493; that span reads GSTGAGKT. Residues 423 to 646 enclose the ABC transporter 1 domain; the sequence is NGDNSLFFSN…RPDFSSKLMG (224 aa). The S-palmitoyl cysteine moiety is linked to residue Cys-524. 2 positions are modified to phosphoserine: Ser-549 and Ser-660. Positions 654–832 are disordered R region; the sequence is SPERRNSIIT…EEINEEDLKE (179 aa). Residue Ser-670 is modified to Phosphoserine; by PKA. Ser-686 is subject to Phosphoserine. Residue Lys-688 forms a Glycyl lysine isopeptide (Lys-Gly) (interchain with G-Cter in ubiquitin) linkage. Ser-700 and Ser-712 each carry phosphoserine. Residue Thr-717 is modified to Phosphothreonine. 5 positions are modified to phosphoserine: Ser-737, Ser-768, Ser-791, Ser-796, and Ser-814. The helical transmembrane segment at 860-880 threads the bilayer; that stretch reads LIFVLIWCLVIFLAEVAVSLV. The region spanning 860 to 1156 is the ABC transmembrane type-1 2 domain; the sequence is LIFVLIWCLV…AVNSSIEVDS (297 aa). The Extracellular portion of the chain corresponds to 881–919; sequence VLWILRNLSSQDKGNSTQSVNSSYAVIFTSTSAYYIFYI. N-linked (GlcNAc...) asparagine glycosylation is found at Asn-887, Asn-895, and Asn-901. A discontinuously helical transmembrane segment spans residues 920–940; the sequence is YVGVADTLLALGLFRGLPLVH. Over 941-991 the chain is Cytoplasmic; that stretch reads TLITVSKILHHKMLHSVLQAPMSTLNTLKAGGILNRFSKDIAILDDLLPLT. A helical membrane pass occupies residues 992 to 1012; it reads IFDFIQLLLIVIGAVAVVSVL. Residues 1013 to 1014 are Extracellular-facing; that stretch reads QP. Residues 1015–1035 traverse the membrane as a helical segment; sequence YIFLATVPVIAAFIILRAYFL. The Cytoplasmic portion of the chain corresponds to 1036-1096; it reads HTSQQLKQLE…TANWFLYLST (61 aa). The helical transmembrane segment at 1097–1117 threads the bilayer; the sequence is LRWFQMRMEIIFVIFFIAVTF. The Extracellular segment spans residues 1118–1131; the sequence is ISILTTGEGEGTVG. A helical membrane pass occupies residues 1132–1152; it reads IILTLAMNIMGTLQWAVNSSI. At 1153 to 1483 the chain is on the cytoplasmic side; sequence EVDSLMRSVS…TEDEVQDTRL (331 aa). Residues 1213–1446 enclose the ABC transporter 2 domain; the sequence is MTVKDLTAKY…RSAFRQAIGP (234 aa). ATP is bound by residues Tyr-1222 and 1247–1254; that span reads GRTGSGKS. The segment at 1389 to 1483 is interaction with GORASP2; the sequence is RTLKQAFADC…TEDEVQDTRL (95 aa). Cys-1398 is lipidated: S-palmitoyl cysteine. The tract at residues 1444 to 1483 is disordered; the sequence is IGPPERPGLLPHRLSSRQRSPSRIAALKEETEDEVQDTRL. Position 1459 is a phosphoserine (Ser-1459). Over residues 1473 to 1483 the composition is skewed to acidic residues; sequence ETEDEVQDTRL. The PDZ-binding signature appears at 1481 to 1483; the sequence is TRL.

This sequence belongs to the ABC transporter superfamily. ABCC family. CFTR transporter (TC 3.A.1.202) subfamily. Monomer; does not require oligomerization for channel activity. May form oligomers in the membrane. Interacts with SLC26A3, SLC26A6 and NHERF1. Interacts with SHANK2. Interacts with MYO6. Interacts (via C-terminus) with GOPC (via PDZ domain); this promotes CFTR internalization and thereby decreases channel activity. Interacts with SLC4A7 through NHERF1. Found in a complex with MYO5B and RAB11A. Interacts with ANO1. Interacts with SLC26A8. Interacts with AHCYL1; the interaction increases CFTR activity. Interacts with CSE1L. The core-glycosylated form interacts with GORASP2 (via PDZ GRASP-type 1 domain) in respone to ER stress. Interacts with MARCHF2; the interaction leads to CFTR ubiqtuitination and degradation. Interacts with ADGRG2. In terms of processing, N-glycosylated. Post-translationally, phosphorylated; cAMP treatment promotes phosphorylation and activates the channel. Dephosphorylation decreases the ATPase activity (in vitro). Phosphorylation at PKA sites activates the channel. Phosphorylation at PKC sites enhances the response to phosphorylation by PKA. Phosphorylated by AMPK; this inhibits channel activity. Ubiquitinated, leading to its degradation in the lysosome. Deubiquitination by USP10 in early endosomes enhances its endocytic recycling to the cell membrane. Ubiquitinated by RNF185 during ER stress. Ubiquitinated by MARCHF2.

The protein resides in the apical cell membrane. It localises to the early endosome membrane. Its subcellular location is the cell membrane. The protein localises to the recycling endosome membrane. It is found in the endoplasmic reticulum membrane. The protein resides in the nucleus. The enzyme catalyses ATP + H2O + closed Cl(-) channel = ADP + phosphate + open Cl(-) channel.. It carries out the reaction chloride(in) = chloride(out). The catalysed reaction is hydrogencarbonate(in) = hydrogencarbonate(out). It catalyses the reaction ATP + H2O = ADP + phosphate + H(+). Functionally, epithelial ion channel that plays an important role in the regulation of epithelial ion and water transport and fluid homeostasis. Mediates the transport of chloride ions across the cell membrane. Possesses an intrinsic ATPase activity and utilizes ATP to gate its channel; the passive flow of anions through the channel is gated by cycles of ATP binding and hydrolysis by the ATP-binding domains. The ion channel is also permeable to HCO(3)(-); selectivity depends on the extracellular chloride concentration. Exerts its function also by modulating the activity of other ion channels and transporters. Contributes to the regulation of the pH and the ion content of the epithelial fluid layer. Modulates the activity of the epithelial sodium channel (ENaC) complex, in part by regulating the cell surface expression of the ENaC complex. May regulate bicarbonate secretion and salvage in epithelial cells by regulating the transporter SLC4A7. Can inhibit the chloride channel activity of ANO1. Plays a role in the chloride and bicarbonate homeostasis during sperm epididymal maturation and capacitation. The sequence is that of Cystic fibrosis transmembrane conductance regulator from Canis lupus familiaris (Dog).